Reading from the N-terminus, the 341-residue chain is KH domain-containing RNA-binding protein QKI (341 aa).

A qua1 domain; involved in homodimerization region spans residues 11-82 (PNPTPDYLMQ…PDAVGPIVQL (72 aa)). Positions 87 to 153 (YVPVKEYPDF…WEHLNEDLHV (67 aa)) constitute a KH domain. The interval 182–213 (AAEGEDSLKKMQLMELAILNGTYRDANIKSPA) is qua2 domain; involved in RNA binding. Position 188 is a phosphoserine (S188). R227 is modified (omega-N-methylarginine). Position 242 is an asymmetric dimethylarginine; by CARM1; alternate (R242). At R242 the chain carries Omega-N-methylarginine; alternate. Residue R256 is modified to Omega-N-methylarginine. The SH3-binding motif lies at 276–279 (PPGP). The short motif at 324-330 (RVHPYQR) is the Nuclear localization signal element.

This sequence belongs to the quaking family. Homodimer; does not require RNA to homodimerize. Able to heterodimerize with BICC1. Methylated by PRMT1. Post-translationally, tyrosine phosphorylated at its C-terminus, probably by FYN. Phosphorylation leads to decreased mRNA-binding affinity, affecting transport and/or stabilization of MBP mRNA. In terms of processing, ubiquitinated by RNF6 in macrophages, leading to its degradation. Present in myelinating oligodendrocytes (at protein level).

It localises to the nucleus. Its subcellular location is the cytoplasm. Its function is as follows. RNA reader protein, which recognizes and binds specific RNAs, thereby regulating RNA metabolic processes, such as pre-mRNA splicing, circular RNA (circRNA) formation, mRNA export, mRNA stability and/or translation. Involved in various cellular processes, such as mRNA storage into stress granules, apoptosis, lipid deposition, interferon response, glial cell fate and development. Binds to the 5'-NACUAAY-N(1,20)-UAAY-3' RNA core sequence. Acts as a mRNA modification reader that specifically recognizes and binds mRNA transcripts modified by internal N(7)-methylguanine (m7G). Promotes the formation of circular RNAs (circRNAs) during the epithelial to mesenchymal transition and in cardiomyocytes: acts by binding to sites flanking circRNA-forming exons. CircRNAs are produced by back-splicing circularization of pre-mRNAs. Plays a central role in myelinization via 3 distinct mechanisms. First, acts by protecting and promoting stability of target mRNAs such as MBP, SIRT2 and CDKN1B, which promotes oligodendrocyte differentiation. Second, participates in mRNA transport by regulating the nuclear export of MBP mRNA. Finally, indirectly regulates mRNA splicing of MAG pre-mRNA during oligodendrocyte differentiation by acting as a negative regulator of MAG exon 12 alternative splicing: acts by binding to HNRNPA1 mRNA splicing factor, preventing its translation. Involved in microglia differentiation and remyelination by regulating microexon alternative splicing of the Rho GTPase pathway. Involved in macrophage differentiation: promotes monocyte differentiation by regulating pre-mRNA splicing in naive peripheral blood monocytes. Acts as an important regulator of muscle development: required for the contractile function of cardiomyocytes by regulating alternative splicing of cardiomyocyte transcripts. Acts as a negative regulator of thermogenesis by decreasing stability, nuclear export and translation of mRNAs encoding PPARGC1A and UCP1. Also required for visceral endoderm function and blood vessel development. May also play a role in smooth muscle development. In addition to its RNA-binding activity, also acts as a nuclear transcription coactivator for SREBF2/SREBP2. The protein is KH domain-containing RNA-binding protein QKI of Rattus norvegicus (Rat).